We begin with the raw amino-acid sequence, 809 residues long: Carbon monoxide dehydrogenase large chain (809 aa).

Cu(+) is bound at residue Cys388. Glu763 contacts Mo-molybdopterin cytosine dinucleotide.

Dimer of heterotrimers. Each heterotrimer consists of a large, a medium and a small subunit. It depends on Cu(+) as a cofactor. Mo-molybdopterin cytosine dinucleotide is required as a cofactor.

The catalysed reaction is CO + a quinone + H2O = a quinol + CO2. In terms of biological role, catalyzes the oxidation of carbon monoxide to carbon dioxide. The sequence is that of Carbon monoxide dehydrogenase large chain (coxL) from Afipia carboxidovorans (strain ATCC 49405 / DSM 1227 / KCTC 32145 / OM5) (Oligotropha carboxidovorans).